The primary structure comprises 1386 residues: X-linked retinitis pigmentosa GTPase regulator homolog (1386 aa).

3 disordered regions span residues 1 to 25 (MFFK…TSSE), 37 to 56 (AGAR…KARR), and 730 to 760 (MPQM…PEQH). A compositionally biased stretch (low complexity) spans 9-25 (SRKTSANSSSDTSTSSE). Positions 45–56 (SVHRQSGKKARR) are enriched in basic residues. RCC1 repeat units follow at residues 737–787 (SKRS…VLSS), 788–838 (SGQL…FICS), 839–891 (DGSL…VLTD), and 893–943 (GRVL…CITE). The segment at 972–994 (LKNTEDPSSPSPSTNGSTPRVNL) is disordered. RCC1 repeat units follow at residues 1034–1085 (EGTL…ASTD) and 1087–1139 (GSVF…FVQK).

Functionally, could be a guanine-nucleotide releasing factor for glo-1. May play a role in gut granule biogenesis. Regulates axon termination in PLM and ALM neurons. This is X-linked retinitis pigmentosa GTPase regulator homolog (glo-4) from Caenorhabditis elegans.